Here is a 119-residue protein sequence, read N- to C-terminus: Chorion class CA protein ERA.2 (119 aa).

An N-terminal signal peptide occupies residues 1-21 (MSKLVVFLFCIQVCFIQNVYS). Residues 22–55 (QCLGRVGPGGPPLGPYGGPLGGPGYGPVGYGGCG) form a left arm region. A central domain region spans residues 56–103 (GYGGSGIGNVAVAGELPVAGSTGVTGQVPVIGAVEFAGPACAVGSVSI). The interval 104–119 (SGACGPTCGCGGSPFY) is right arm.

The protein belongs to the chorion protein family.

Its function is as follows. This protein is one of many from the eggshell of the silk moth. This is Chorion class CA protein ERA.2 (ERA.2) from Bombyx mori (Silk moth).